The sequence spans 375 residues: Succinyl-diaminopimelate desuccinylase (375 aa).

Position 66 (His66) interacts with Zn(2+). Residue Asp68 is part of the active site. Asp99 is a Zn(2+) binding site. Residue Glu133 is the Proton acceptor of the active site. Zn(2+)-binding residues include Glu134, Glu162, and His348.

It belongs to the peptidase M20A family. DapE subfamily. As to quaternary structure, homodimer. The cofactor is Zn(2+). Co(2+) is required as a cofactor.

It carries out the reaction N-succinyl-(2S,6S)-2,6-diaminopimelate + H2O = (2S,6S)-2,6-diaminopimelate + succinate. It functions in the pathway amino-acid biosynthesis; L-lysine biosynthesis via DAP pathway; LL-2,6-diaminopimelate from (S)-tetrahydrodipicolinate (succinylase route): step 3/3. Catalyzes the hydrolysis of N-succinyl-L,L-diaminopimelic acid (SDAP), forming succinate and LL-2,6-diaminopimelate (DAP), an intermediate involved in the bacterial biosynthesis of lysine and meso-diaminopimelic acid, an essential component of bacterial cell walls. This is Succinyl-diaminopimelate desuccinylase from Teredinibacter turnerae (strain ATCC 39867 / T7901).